The sequence spans 378 residues: 2-aminoethylphosphonate--pyruvate transaminase 1 (378 aa).

Lys-194 is subject to N6-(pyridoxal phosphate)lysine.

Belongs to the class-V pyridoxal-phosphate-dependent aminotransferase family. PhnW subfamily. As to quaternary structure, homodimer. The cofactor is pyridoxal 5'-phosphate.

It catalyses the reaction (2-aminoethyl)phosphonate + pyruvate = phosphonoacetaldehyde + L-alanine. Involved in phosphonate degradation. This Cupriavidus pinatubonensis (strain JMP 134 / LMG 1197) (Cupriavidus necator (strain JMP 134)) protein is 2-aminoethylphosphonate--pyruvate transaminase 1.